The primary structure comprises 335 residues: Ketol-acid reductoisomerase (NADP(+)) (335 aa).

The KARI N-terminal Rossmann domain occupies 5-185; that stretch reads SKIYTDKDSN…GATRAGVIPT (181 aa). NADP(+) is bound by residues 28–31, S56, and 86–89; these read YGSQ and DMVQ. H111 is a catalytic residue. G137 is an NADP(+) binding site. The KARI C-terminal knotted domain maps to 186 to 331; the sequence is TFKEETETDL…NQLKDLIQKG (146 aa). Residues D194, E198, E230, and E234 each contribute to the Mg(2+) site. S255 provides a ligand contact to substrate.

It belongs to the ketol-acid reductoisomerase family. The cofactor is Mg(2+).

The catalysed reaction is (2R)-2,3-dihydroxy-3-methylbutanoate + NADP(+) = (2S)-2-acetolactate + NADPH + H(+). It carries out the reaction (2R,3R)-2,3-dihydroxy-3-methylpentanoate + NADP(+) = (S)-2-ethyl-2-hydroxy-3-oxobutanoate + NADPH + H(+). It participates in amino-acid biosynthesis; L-isoleucine biosynthesis; L-isoleucine from 2-oxobutanoate: step 2/4. The protein operates within amino-acid biosynthesis; L-valine biosynthesis; L-valine from pyruvate: step 2/4. In terms of biological role, involved in the biosynthesis of branched-chain amino acids (BCAA). Catalyzes an alkyl-migration followed by a ketol-acid reduction of (S)-2-acetolactate (S2AL) to yield (R)-2,3-dihydroxy-isovalerate. In the isomerase reaction, S2AL is rearranged via a Mg-dependent methyl migration to produce 3-hydroxy-3-methyl-2-ketobutyrate (HMKB). In the reductase reaction, this 2-ketoacid undergoes a metal-dependent reduction by NADPH to yield (R)-2,3-dihydroxy-isovalerate. This Saccharolobus islandicus (strain L.S.2.15 / Lassen #1) (Sulfolobus islandicus) protein is Ketol-acid reductoisomerase (NADP(+)).